Here is a 490-residue protein sequence, read N- to C-terminus: Cytochrome P450 71A22 (490 aa).

A helical transmembrane segment spans residues 2–22; that stretch reads ESMIRIILLSLIIFITILFFI. Residue C432 participates in heme binding.

This sequence belongs to the cytochrome P450 family. It depends on heme as a cofactor.

The protein resides in the membrane. In Arabidopsis thaliana (Mouse-ear cress), this protein is Cytochrome P450 71A22 (CYP71A22).